We begin with the raw amino-acid sequence, 328 residues long: Malate dehydrogenase (328 aa).

11–17 provides a ligand contact to NAD(+); that stretch reads GAAGQIG. 2 residues coordinate substrate: Arg94 and Arg100. NAD(+) is bound by residues Asn107, Gln114, and 131–133; that span reads VGN. Residues Asn133 and Arg164 each contribute to the substrate site. Catalysis depends on His189, which acts as the Proton acceptor.

It belongs to the LDH/MDH superfamily. MDH type 2 family.

It carries out the reaction (S)-malate + NAD(+) = oxaloacetate + NADH + H(+). In terms of biological role, catalyzes the reversible oxidation of malate to oxaloacetate. The protein is Malate dehydrogenase of Xanthomonas campestris pv. campestris (strain B100).